Here is an 874-residue protein sequence, read N- to C-terminus: MSIPSILRKETLKKKDKNIDLQENNINDLVVSASRVIAPLWPISTFAAHHPWMGLEKQSFEQVANWLKEARNVDIYPSASMIHSAKAKGEIEESFLQIALSRWLDSQSFHMPRETAERFCQEALKLERLPSSLLSSPELNKLAEEINYVNTGSMKDSSMQPISSLIENQNGDNLSDILNYHIIKWCKLYLDDAGASWAMPNREKGFYRAWQHLITFDPSLSKTERKVLKDWPEDALIALTKALSELGISESNMQAYLEGHLLSLPGWAGMIRWRSQQSIEEQELLIEYLAVRLSMELAIVKPYLPLKNQKVEKKVSIVPLIASWIYWGDISIEKWLQMSAAEQSELLAFAYRFDENTRKKLWLEAWEQTHAEQLREKIASKQRATHDKKRVVAQLAFCIDVRSEPFRRHLEKLGPFETFGIAGFFGLPIATTELGSNDSHPSLPVILKPKHQIKELTDENECKSYEQRKMVGSSVRYTFKTMKQNVLTSMLLPEVSGPLLGLQMVTRSFVPRRVGGFIRNLRKNMLQKPDTTFSLNHVHDTNCEIPIGFTKEEKVNYVRQALKMVGLTEGFAPLVVMCGHSSQSTNNPYAAALECGACGGAAGGFNARVFATLCNLPEVREALSAEGIKIPDDTIFAAAEHKTTVDELEWIYVPELSETAQEAFDCIEAIMPNVSQHANRERLMQLPHFKTKIKNPSKEAHRFAEDWSEIRPEWGLARNASFIIGQRELTRDCDLEGRAFLHNYDWKQDESGDILANIIAGPGTVAQWINLQYYASTVAPHYYGSGNKTTQTVTAGLGVMQGNASDLLPGLPWQSVMQSDRETYHSPLRLLIVIQAPTKYIERLLNNNFTFREKVQNKWVRLASVDPEGRWKNW.

4 residues coordinate Zn(2+): Cys-398, Asp-400, His-580, and Cys-595.

Belongs to the inorganic carbon transporter (TC 9.A.2) DabA family. In terms of assembly, forms a complex with DabB. Zn(2+) serves as cofactor.

The protein localises to the cell membrane. In terms of biological role, part of an energy-coupled inorganic carbon pump. This Bacillus thuringiensis subsp. konkukian (strain 97-27) protein is Probable inorganic carbon transporter subunit DabA.